We begin with the raw amino-acid sequence, 118 residues long: Small ribosomal subunit protein uS13 (118 aa).

The interval 94 to 118 (GLPVRGQRTQTNARTRKGPRRLARK) is disordered. Over residues 107–118 (RTRKGPRRLARK) the composition is skewed to basic residues.

This sequence belongs to the universal ribosomal protein uS13 family. Part of the 30S ribosomal subunit. Forms a loose heterodimer with protein S19. Forms two bridges to the 50S subunit in the 70S ribosome.

Its function is as follows. Located at the top of the head of the 30S subunit, it contacts several helices of the 16S rRNA. In the 70S ribosome it contacts the 23S rRNA (bridge B1a) and protein L5 of the 50S subunit (bridge B1b), connecting the 2 subunits; these bridges are implicated in subunit movement. Contacts the tRNAs in the A and P-sites. In Nitrosococcus oceani (strain ATCC 19707 / BCRC 17464 / JCM 30415 / NCIMB 11848 / C-107), this protein is Small ribosomal subunit protein uS13.